The following is a 244-amino-acid chain: Small ribosomal subunit protein uS2 (244 aa).

Residues 224-244 (GQQGSDEAEEAEEAAEEVVAE) form a disordered region. Residues 229 to 244 (DEAEEAEEAAEEVVAE) show a composition bias toward acidic residues.

Belongs to the universal ribosomal protein uS2 family.

The polypeptide is Small ribosomal subunit protein uS2 (Desulfitobacterium hafniense (strain DSM 10664 / DCB-2)).